Here is a 558-residue protein sequence, read N- to C-terminus: Probable beta-glucosidase btgE (558 aa).

Positions Met1–Ala18 are cleaved as a signal peptide. Disordered regions lie at residues Ser64–Pro105 and Leu251–Met305. Composition is skewed to low complexity over residues Pro76–Pro105 and Pro252–Ala292. Polar residues predominate over residues Glu293–Met305. The active-site Proton donor is Glu399. Glu495 functions as the Nucleophile in the catalytic mechanism.

The protein belongs to the glycosyl hydrolase 17 family.

The protein resides in the secreted. The protein localises to the cell wall. It carries out the reaction Hydrolysis of terminal, non-reducing beta-D-glucosyl residues with release of beta-D-glucose.. It participates in glycan metabolism; cellulose degradation. Its function is as follows. Beta-glucosidases are one of a number of cellulolytic enzymes involved in the degradation of cellulosic biomass. Catalyzes the last step releasing glucose from the inhibitory cellobiose. This chain is Probable beta-glucosidase btgE (btgE), found in Aspergillus terreus (strain NIH 2624 / FGSC A1156).